We begin with the raw amino-acid sequence, 283 residues long: NADPH-dependent 7-cyano-7-deazaguanine reductase (283 aa).

90–92 (IES) is a binding site for substrate. 92–93 (SK) provides a ligand contact to NADPH. C190 acts as the Thioimide intermediate in catalysis. D197 serves as the catalytic Proton donor. 229–230 (HE) is a binding site for substrate. Residue 258-259 (RG) participates in NADPH binding.

The protein belongs to the GTP cyclohydrolase I family. QueF type 2 subfamily. Homodimer.

It is found in the cytoplasm. The catalysed reaction is 7-aminomethyl-7-carbaguanine + 2 NADP(+) = 7-cyano-7-deazaguanine + 2 NADPH + 3 H(+). The protein operates within tRNA modification; tRNA-queuosine biosynthesis. In terms of biological role, catalyzes the NADPH-dependent reduction of 7-cyano-7-deazaguanine (preQ0) to 7-aminomethyl-7-deazaguanine (preQ1). This chain is NADPH-dependent 7-cyano-7-deazaguanine reductase, found in Dechloromonas aromatica (strain RCB).